The following is a 142-amino-acid chain: ATP synthase epsilon chain (142 aa).

The protein belongs to the ATPase epsilon chain family. F-type ATPases have 2 components, CF(1) - the catalytic core - and CF(0) - the membrane proton channel. CF(1) has five subunits: alpha(3), beta(3), gamma(1), delta(1), epsilon(1). CF(0) has three main subunits: a, b and c.

The protein localises to the cell inner membrane. In terms of biological role, produces ATP from ADP in the presence of a proton gradient across the membrane. The protein is ATP synthase epsilon chain of Mannheimia succiniciproducens (strain KCTC 0769BP / MBEL55E).